We begin with the raw amino-acid sequence, 822 residues long: DNA gyrase subunit A (822 aa).

One can recognise a Topo IIA-type catalytic domain in the interval 32–497; that stretch reads LPDVRDGLKP…QVLSLEDEDL (466 aa). Tyr120 serves as the catalytic O-(5'-phospho-DNA)-tyrosine intermediate. Residues 524–530 carry the GyrA-box motif; sequence QKRGGRG.

It belongs to the type II topoisomerase GyrA/ParC subunit family. As to quaternary structure, heterotetramer, composed of two GyrA and two GyrB chains. In the heterotetramer, GyrA contains the active site tyrosine that forms a transient covalent intermediate with DNA, while GyrB binds cofactors and catalyzes ATP hydrolysis.

It localises to the cytoplasm. The catalysed reaction is ATP-dependent breakage, passage and rejoining of double-stranded DNA.. A type II topoisomerase that negatively supercoils closed circular double-stranded (ds) DNA in an ATP-dependent manner to modulate DNA topology and maintain chromosomes in an underwound state. Negative supercoiling favors strand separation, and DNA replication, transcription, recombination and repair, all of which involve strand separation. Also able to catalyze the interconversion of other topological isomers of dsDNA rings, including catenanes and knotted rings. Type II topoisomerases break and join 2 DNA strands simultaneously in an ATP-dependent manner. This chain is DNA gyrase subunit A, found in Streptococcus pneumoniae serotype 4 (strain ATCC BAA-334 / TIGR4).